A 64-amino-acid polypeptide reads, in one-letter code: Toxin BmCa-1 (64 aa).

An N-terminal signal peptide occupies residues 1–18; it reads MNTFVVVFLLLTAILCHA. A propeptide spanning residues 19–27 is cleaved from the precursor; that stretch reads EHALDETAR. Cystine bridges form between cysteine 29/cysteine 43, cysteine 36/cysteine 49, and cysteine 42/cysteine 58.

This sequence belongs to the scorpion calcin-like family. As to expression, expressed by the venom gland.

It localises to the secreted. Functionally, may increase intracellular calcium release through the activation of nuclear inositol 1,4,5-trisphosphate receptors (ITPR) of cardiomyocytes, thereby causing an increase in the contraction frequency of these cells. This Olivierus martensii (Manchurian scorpion) protein is Toxin BmCa-1.